The chain runs to 877 residues: DNA mismatch repair protein MutS (877 aa).

630–637 (GPNMAGKS) provides a ligand contact to ATP.

Belongs to the DNA mismatch repair MutS family.

In terms of biological role, this protein is involved in the repair of mismatches in DNA. It is possible that it carries out the mismatch recognition step. This protein has a weak ATPase activity. The protein is DNA mismatch repair protein MutS of Jannaschia sp. (strain CCS1).